An 833-amino-acid chain; its full sequence is Mannosyl-oligosaccharide glucosidase (833 aa).

The Cytoplasmic portion of the chain corresponds to 1 to 10 (MLISKSKMFK). A helical; Signal-anchor for type II membrane protein transmembrane segment spans residues 11–28 (TFWILTSIVLLASATVDI). Over 29 to 833 (SKLQEFEEYQ…ALVVNILGRF (805 aa)) the chain is Lumenal. 2 residues coordinate substrate: N42 and N122. N-linked (GlcNAc...) asparagine glycans are attached at residues N42, N122, and N135. A substrate-binding site is contributed by E143. D601 (proton donor) is an active-site residue. Residues C669 and C685 are joined by a disulfide bond. Residue N787 is glycosylated (N-linked (GlcNAc...) asparagine). E804 (proton acceptor) is an active-site residue.

Belongs to the glycosyl hydrolase 63 family. N-glycosylated.

It is found in the endoplasmic reticulum membrane. It carries out the reaction N(4)-(alpha-D-Glc-(1-&gt;2)-alpha-D-Glc-(1-&gt;3)-alpha-D-Glc-(1-&gt;3)-alpha-D-Man-(1-&gt;2)-alpha-D-Man-(1-&gt;2)-alpha-D-Man-(1-&gt;3)-[alpha-D-Man-(1-&gt;2)-alpha-D-Man-(1-&gt;3)-[alpha-D-Man-(1-&gt;2)-alpha-D-Man-(1-&gt;6)]-alpha-D-Man-(1-&gt;6)]-beta-D-Man-(1-&gt;4)-beta-D-GlcNAc-(1-&gt;4)-beta-D-GlcNAc)-L-asparaginyl-[protein] + H2O = N(4)-(alpha-D-Glc-(1-&gt;3)-alpha-D-Glc-(1-&gt;3)-alpha-D-Man-(1-&gt;2)-alpha-D-Man-(1-&gt;2)-alpha-D-Man-(1-&gt;3)-[alpha-D-Man-(1-&gt;2)-alpha-D-Man-(1-&gt;3)-[alpha-D-Man-(1-&gt;2)-alpha-D-Man-(1-&gt;6)]-alpha-D-Man-(1-&gt;6)]-beta-D-Man-(1-&gt;4)-beta-D-GlcNAc-(1-&gt;4)-beta-D-GlcNAc)-L-asparaginyl-[protein] + beta-D-glucose. Its pathway is glycan metabolism; N-glycan degradation. Miglitol is an effective inhibitor at 1 mM. Cleaves the distal alpha 1,2-linked glucose residue from the Glc(3)Man(9)GlcNAc(2) oligosaccharide precursor highly specifically. Seems to play a role in beta-1,6-glucan synthesis. The chain is Mannosyl-oligosaccharide glucosidase (CWH41) from Saccharomyces cerevisiae (strain ATCC 204508 / S288c) (Baker's yeast).